The primary structure comprises 330 residues: T-cell leukemia homeobox protein 1 (330 aa).

The tract at residues 186-207 (DRFTGHPYQNRTPPKKKKPRTS) is disordered. Positions 201-260 (KKKPRTSFTRLQICELEKRFHRQKYLASAERAALAKALKMTDAQVKTWFQNRRTKWRRQT) form a DNA-binding region, homeobox. Position 236 is an N6-acetyllysine (Lys236).

Interacts with MEIS1, MEIS2, PBX1, PBX2 and PBX3.

The protein resides in the nucleus. Functionally, controls the genesis of the spleen. Binds to the DNA sequence 5'-GGCGGTAAGTGG-3'. The sequence is that of T-cell leukemia homeobox protein 1 (TLX1) from Homo sapiens (Human).